The chain runs to 471 residues: Glutamyl-tRNA(Gln) amidotransferase subunit A (471 aa).

Residues lysine 66 and serine 141 each act as charge relay system in the active site. The active-site Acyl-ester intermediate is serine 165.

This sequence belongs to the amidase family. GatA subfamily. Heterotrimer of A, B and C subunits.

It carries out the reaction L-glutamyl-tRNA(Gln) + L-glutamine + ATP + H2O = L-glutaminyl-tRNA(Gln) + L-glutamate + ADP + phosphate + H(+). Allows the formation of correctly charged Gln-tRNA(Gln) through the transamidation of misacylated Glu-tRNA(Gln) in organisms which lack glutaminyl-tRNA synthetase. The reaction takes place in the presence of glutamine and ATP through an activated gamma-phospho-Glu-tRNA(Gln). This Thermus thermophilus (strain ATCC BAA-163 / DSM 7039 / HB27) protein is Glutamyl-tRNA(Gln) amidotransferase subunit A.